The primary structure comprises 364 residues: Protein Bop (364 aa).

The tract at residues Ser-66–Ser-88 is disordered. Positions Leu-114–His-128 match the BH3 motif. Residues Gln-258–Phe-364 form a disordered region. Composition is skewed to pro residues over residues Ala-311–Pro-322 and Pro-355–Phe-364.

As to quaternary structure, interacts (via BH3 domain) with VDAC1. Interacts with pro-survival Bcl-2 family members, BCL2, BCL2L1 isoform Bcl-X(L), MCL1, BCL2A1 and BCL2L2. Interacts with BAX and BAK1. As to expression, ubiquitously expressed.

The protein localises to the mitochondrion. Its function is as follows. Could induce apoptosis in a BH3 domain-dependent manner. The direct interaction network of Bcl-2 family members may play a key role in modulation RTL10/BOP intrinsic apoptotic signaling activity. The polypeptide is Protein Bop (Homo sapiens (Human)).